The following is a 203-amino-acid chain: ATP-dependent Clp protease proteolytic subunit 2 (203 aa).

The Nucleophile role is filled by Ser98. His123 is an active-site residue.

Belongs to the peptidase S14 family. Fourteen ClpP subunits assemble into 2 heptameric rings which stack back to back to give a disk-like structure with a central cavity, resembling the structure of eukaryotic proteasomes.

The protein localises to the cytoplasm. It catalyses the reaction Hydrolysis of proteins to small peptides in the presence of ATP and magnesium. alpha-casein is the usual test substrate. In the absence of ATP, only oligopeptides shorter than five residues are hydrolyzed (such as succinyl-Leu-Tyr-|-NHMec, and Leu-Tyr-Leu-|-Tyr-Trp, in which cleavage of the -Tyr-|-Leu- and -Tyr-|-Trp bonds also occurs).. In terms of biological role, cleaves peptides in various proteins in a process that requires ATP hydrolysis. Has a chymotrypsin-like activity. Plays a major role in the degradation of misfolded proteins. The chain is ATP-dependent Clp protease proteolytic subunit 2 from Chlamydia pneumoniae (Chlamydophila pneumoniae).